Consider the following 62-residue polypeptide: Large ribosomal subunit protein bL33 (62 aa).

Belongs to the bacterial ribosomal protein bL33 family.

The polypeptide is Large ribosomal subunit protein bL33 (Porphyromonas gingivalis (strain ATCC 33277 / DSM 20709 / CIP 103683 / JCM 12257 / NCTC 11834 / 2561)).